We begin with the raw amino-acid sequence, 454 residues long: Asparagine--tRNA ligase (454 aa).

Belongs to the class-II aminoacyl-tRNA synthetase family. In terms of assembly, homodimer.

It is found in the cytoplasm. The catalysed reaction is tRNA(Asn) + L-asparagine + ATP = L-asparaginyl-tRNA(Asn) + AMP + diphosphate + H(+). The chain is Asparagine--tRNA ligase from Microcystis aeruginosa (strain NIES-843 / IAM M-2473).